The primary structure comprises 539 residues: Effector protein hopAB1 (539 aa).

Disordered stretches follow at residues 1-93, 163-220, 230-249, and 315-336; these read MPGI…PEAQ, QTVR…RHPQ, ASAARHNHSANQTNEALRRL, and RQTTTNSPELPPLASSAESGRR. Residues 18-31 show a composition bias toward basic and acidic residues; the sequence is TDGEPVTEREHDSS. Positions 181 to 194 are enriched in low complexity; sequence SSSGSSQRSLIGRS.

It belongs to the HopAB family.

It localises to the secreted. Effector protein that plays different roles depending on the species and plant cultivars that interact with the pathogen. Acts as a virulence determinant by enhancing the development of disease symptoms and bacterial growth. Acts as an avirulence factor by eliciting hypersensitive response (HR) and plant resistance. This Pseudomonas savastanoi pv. phaseolicola (strain 1448A / Race 6) (Pseudomonas syringae pv. phaseolicola (strain 1448A / Race 6)) protein is Effector protein hopAB1 (hopAB1).